Reading from the N-terminus, the 524-residue chain is Acetyl-CoA hydrolase (524 aa).

279–283 (GIGNI) provides a ligand contact to CoA. Catalysis depends on E304, which acts as the 5-glutamyl coenzyme A thioester intermediate. G398 contributes to the CoA binding site.

The protein belongs to the acetyl-CoA hydrolase/transferase family.

The protein localises to the cytoplasm. It catalyses the reaction acetyl-CoA + H2O = acetate + CoA + H(+). In terms of biological role, presumably involved in regulating the intracellular acetyl-CoA pool for fatty acid and cholesterol synthesis and fatty acid oxidation. The sequence is that of Acetyl-CoA hydrolase (ACH1) from Yarrowia lipolytica (strain CLIB 122 / E 150) (Yeast).